The sequence spans 447 residues: Peptide chain release factor 1, mitochondrial (447 aa).

The transit peptide at 1 to 63 (MNRRHLFAWL…LLNKNCSRRY (63 aa)) directs the protein to the mitochondrion. The interval 299–363 (PKDLRIDTFR…LRARLYQQII (65 aa)) is GGQ domain. A GGQ motif is present at residues 313–315 (GGQ). Position 315 is an N5-methylglutamine (Gln315).

It belongs to the prokaryotic/mitochondrial release factor family. In terms of processing, methylation of glutamine in the GGQ triplet by HEMK1 is conserved from bacteria to mammals.

It localises to the mitochondrion. Mitochondrial peptide chain release factor that directs the termination of translation in response to the peptide chain non-canonical stop codons AGG and AGA. Non-canonical termination codons AGG and AGA are found at the end of MT-CO1/COX1 and MT-ND6/ND6 open reading frames, respectively. Recognizes non-canonical stop codons via a network of interactions between the codon, MTRF1 and the ribosomal RNA (rRNA): in contrast to other translation release factors, which identify the codon in the A-site via direct interactions of amino acid side chains with the bases, MTRF1 repositions the first 2 bases of the stop codon to use an intricate network of interactions that includes residues of the release factor, the rRNA of the small ribosomal subunit, as well as neighboring bases of the mRNA. The protein is Peptide chain release factor 1, mitochondrial (MTRF1) of Bos taurus (Bovine).